A 181-amino-acid chain; its full sequence is Caltractin ICL1a (181 aa).

The interval 1–29 is disordered; sequence MARRGQQPPPQQAPPAQKNQPGKFNPAEF. The span at 14–23 shows a compositional bias: low complexity; the sequence is PPAQKNQPGK. EF-hand domains follow at residues 37–72, 73–108, 110–145, and 146–181; these read EEVLEIKEAFDLFDTDGTQSIDPKELKAAMTSLGFE, AKNQTIYQMISDLDTDGSGQIDFAEFLKLMTARISE, DSKADIQKVFNLFDSERAGVVTLKDLRKVAKELGET, and MDDSELQEMIDRADSDGDAQVTFEDFYNIMTKKTFA. Residues Asp-50, Asp-52, Thr-54, Ser-56, Glu-61, Asp-86, Asp-88, Ser-90, Gln-92, and Glu-97 each coordinate Ca(2+).

Belongs to the centrin family. As to quaternary structure, monomer.

It localises to the cytoplasm. Its subcellular location is the cytoskeleton. In terms of biological role, plays a fundamental role in microtubule organizing center structure and function. Component of the infraciliary lattice (ICL) and the ciliary basal bodies. The protein is Caltractin ICL1a (Icl1a) of Paramecium tetraurelia.